The primary structure comprises 1381 residues: MMSLRLFSILLAAVVSGAQGWGYYGCNEELVGPLYARSLGASSYYGLFTTARFARLHGISGWSPRIGDPNPWLQIDLMKKHRIRAVATQGAFNSWDWVTRYMLLYGDRVDSWTPFYQQGHNATFFGNVNDSAVVRHDLHYHFTARYIRIVPLAWNPRGKIGLRLGIYGCPYTSNILYFDGDDAISYRFQRGASQSLWDVFAFSFKTEEKDGLLLHTEGSQGDYVTLELQGAHLLLHMSLGSSPIQPRPGHTTVSAGGVLNDLSWHYVRVDRYGREANLTLDGYVHRFVLNGDFERLNLENEIFIGGLVGAARKNLAYRHNFRGCIENVIYNRINIAEMAVQRHSRITFEGNVAFRCLDPVPHPINFGGPHNFVQVPGFPRRGRLAVSFRFRTWDLTGLLLFSRLGDGLGHVELMLSEGQVNVSIAQTGRKKLQFAAGYRLNDGFWHEVNFVAQENHAVISIDDVEGAEVRVSYPLLIRTGTSYFFGGCPKPASRWGCHSNQTAFHGCMELLKVDGQLVNLTLVEFRKLGYFAEVLFDTCGITDRCSPNMCEHDGRCYQSWDDFICYCELTGYKGVTCHEPLYKESCEAYRLSGKYSGNYTIDPDGSGPLKPFVVYCDIRENRAWTVVRHDRLWTTRVTGSSMDRPFLGAIQYWNASWEEVSALANASQHCEQWIEFSCYNSRLLNTAGGYPYSFWIGRNEEQHFYWGGSQPGIQRCACGLDQSCIDPALHCNCDADQPQWRTDKGLLTFVDHLPVTQVVIGDTNRSSSEAQFFLRPLRCYGDRNSWNTISFRTGAALRFPPIRANHSLDVSFYFRTSAPSGVFLENMGGPFCQWRRPYVRVELNTSRDVVFAFDIGNGDENLTVHSDDFEFNDDEWHLVRAEINVKQARLRVDHRPWVLRPMPLQTYIWLEYDQPLYVGSAELKRRPFVGCLRAMRLNGVTLNLEGRANASEGTFPNCTGHCTHPRFPCFHGGRCVERYSYYTCDCDLTAFDGPYCNHDIGGFFETGTWMRYNLQSALRSAAQEFSHMLSRPVPGYEPGYIPGYDTPGYVPGYHGPGYRLPDYPRPGRPVPGYRGPVYNVTGEEVSFSFSTSSAPAVLLYVSSFVRDYMAVLIKEDGTLQLRYQLGTSPYVYQLTTRPVTDGQPHSVNITRVYRNLFIQVDYFPLTEQKFSLLVDSQLDSPKALYLGRVMETGVIDPEIQRYNTPGFSGCLSGVRFNNVAPLKTHFRTPRPMTAELAEAMRVQGELSESNCGAMPRLVSEVPPELDPWYLPPDFPYYHDDGWIAILLGFLVAFLLLGLVGMLVLFYLQNHRYKGSYHTNEPKATHDSHPGGKAPLPPSGPAQAPAPTPAPTQVPTPAPAPASGPGPRDQNLPQILEESRSE.

A signal peptide spans 1 to 20 (MMSLRLFSILLAAVVSGAQG). Residues 21–1284 (WGYYGCNEEL…PYYHDDGWIA (1264 aa)) lie on the Extracellular side of the membrane. One can recognise an F5/8 type C domain in the interval 26–169 (CNEELVGPLY…IGLRLGIYGC (144 aa)). Cys26 and Cys169 are joined by a disulfide. Residues Asn121, Asn129, and Asn277 are each glycosylated (N-linked (GlcNAc...) asparagine). Laminin G-like domains are found at residues 204 to 356 (FKTE…AFRC) and 390 to 539 (FRTW…FDTC). Cys324 and Cys356 are joined by a disulfide. Residues Asn421, Asn500, and Asn519 are each glycosylated (N-linked (GlcNAc...) asparagine). 4 disulfides stabilise this stretch: Cys507–Cys539, Cys545–Cys556, Cys550–Cys565, and Cys567–Cys577. In terms of domain architecture, EGF-like 1 spans 544-576 (RCSPNMCEHDGRCYQSWDDFICYCELTGYKGVT). The region spanning 577–796 (CHEPLYKESC…NTISFRTGAA (220 aa)) is the Fibrinogen C-terminal domain. Asn598, Asn654, Asn665, Asn764, Asn805, Asn844, Asn861, Asn949, and Asn957 each carry an N-linked (GlcNAc...) asparagine glycan. The 145-residue stretch at 814–958 (FRTSAPSGVF…NASEGTFPNC (145 aa)) folds into the Laminin G-like 3 domain. 4 disulfides stabilise this stretch: Cys931–Cys958, Cys962–Cys975, Cys969–Cys984, and Cys986–Cys996. The EGF-like 2 domain maps to 962–996 (CTHPRFPCFHGGRCVERYSYYTCDCDLTAFDGPYC). Asn1079 and Asn1148 each carry an N-linked (GlcNAc...) asparagine glycan. One can recognise a Laminin G-like 4 domain in the interval 1089–1251 (FSTSSAPAVL…VQGELSESNC (163 aa)). Cys1210 and Cys1251 form a disulfide bridge. A helical transmembrane segment spans residues 1285–1305 (ILLGFLVAFLLLGLVGMLVLF). Over 1306–1381 (YLQNHRYKGS…PQILEESRSE (76 aa)) the chain is Cytoplasmic. A disordered region spans residues 1317–1381 (HTNEPKATHD…PQILEESRSE (65 aa)). The segment covering 1319–1329 (NEPKATHDSHP) has biased composition (basic and acidic residues). Residues 1329 to 1366 (PGGKAPLPPSGPAQAPAPTPAPTQVPTPAPAPASGPGP) carry the SH3-binding motif. The segment covering 1334–1363 (PLPPSGPAQAPAPTPAPTQVPTPAPAPASG) has biased composition (pro residues). Ser1380 carries the phosphoserine modification.

The protein belongs to the neurexin family. Interacts with CNTN1/contactin in cis form. Predominantly expressed in brain. In myelinated nerve fibers of the CNS predominantly found in paranodal axoglial junctions. In unmyelinated nerve fibers of the CNS diffusely distributed along the entire surface. Weak expression is detected in ovary, pancreas, colon, lung, heart, intestine and testis.

The protein resides in the membrane. Its subcellular location is the cell junction. It is found in the paranodal septate junction. In terms of biological role, required, with CNTNAP2, for radial and longitudinal organization of myelinated axons. Plays a role in the formation of functional distinct domains critical for saltatory conduction of nerve impulses in myelinated nerve fibers. Demarcates the paranodal region of the axo-glial junction. In association with contactin involved in the signaling between axons and myelinating glial cells. This Rattus norvegicus (Rat) protein is Contactin-associated protein 1 (Cntnap1).